The sequence spans 339 residues: Ribosomal RNA small subunit methyltransferase C (339 aa).

Belongs to the methyltransferase superfamily. RsmC family. Monomer.

It localises to the cytoplasm. It catalyses the reaction guanosine(1207) in 16S rRNA + S-adenosyl-L-methionine = N(2)-methylguanosine(1207) in 16S rRNA + S-adenosyl-L-homocysteine + H(+). Its function is as follows. Specifically methylates the guanine in position 1207 of 16S rRNA in the 30S particle. The protein is Ribosomal RNA small subunit methyltransferase C of Aliivibrio salmonicida (strain LFI1238) (Vibrio salmonicida (strain LFI1238)).